Reading from the N-terminus, the 218-residue chain is Putative receptor like protein 25 (218 aa).

Residues 1–178 (MIYTKNAYGS…QEDAKVLNWK (178 aa)) are Extracellular-facing. 4 LRR repeats span residues 34–58 (LTLYSAIDFSGNRLEGQIPESIGLL), 59–82 (KALIALNLSNNAFIGNIPMSMANL), 83–106 (IELESLDMSRNGLSGTIPQGLKTL), and 108–131 (FLGYINVSHNQLKGEIPQGTQITG). N-linked (GlcNAc...) asparagine glycosylation occurs at Asn-65. N-linked (GlcNAc...) asparagine glycosylation is present at Asn-113. Residues 179 to 199 (AVATGYGPGVFFGLAIAQIIA) form a helical membrane-spanning segment. Topologically, residues 200-218 (SYKPEWLVKIIGPNKRRNH) are cytoplasmic.

This sequence belongs to the RLP family.

It is found in the cell membrane. The chain is Putative receptor like protein 25 from Arabidopsis thaliana (Mouse-ear cress).